Consider the following 234-residue polypeptide: uncharacterized protein (234 aa).

L-glutamine is bound at residue 68–70; sequence GES. Cysteine 101 (nucleophile) is an active-site residue. Residues arginine 131 and 167-168 contribute to the L-glutamine site; that span reads IR. Active-site charge relay system residues include histidine 208 and glutamate 210.

It belongs to the glutaminase PdxT/SNO family.

It localises to the cytoplasm. It catalyses the reaction L-glutamine + H2O = L-glutamate + NH4(+). This is an uncharacterized protein from Schizosaccharomyces pombe (strain 972 / ATCC 24843) (Fission yeast).